A 502-amino-acid polypeptide reads, in one-letter code: D-alanine--D-alanyl carrier protein ligase (502 aa).

150-151 (TS) is a binding site for ATP. Aspartate 195 lines the D-alanine pocket. 290 to 295 (NTYGPT) lines the ATP pocket. Valine 299 is a D-alanine binding site. Residues aspartate 381 and lysine 490 each contribute to the ATP site. Position 490 (lysine 490) interacts with D-alanine.

This sequence belongs to the ATP-dependent AMP-binding enzyme family. DltA subfamily.

It localises to the cytoplasm. The catalysed reaction is holo-[D-alanyl-carrier protein] + D-alanine + ATP = D-alanyl-[D-alanyl-carrier protein] + AMP + diphosphate. It functions in the pathway cell wall biogenesis; lipoteichoic acid biosynthesis. Its function is as follows. Catalyzes the first step in the D-alanylation of lipoteichoic acid (LTA), the activation of D-alanine and its transfer onto the D-alanyl carrier protein (Dcp) DltC. In an ATP-dependent two-step reaction, forms a high energy D-alanyl-AMP intermediate, followed by transfer of the D-alanyl residue as a thiol ester to the phosphopantheinyl prosthetic group of the Dcp. D-alanylation of LTA plays an important role in modulating the properties of the cell wall in Gram-positive bacteria, influencing the net charge of the cell wall. The chain is D-alanine--D-alanyl carrier protein ligase from Bacillus licheniformis (strain ATCC 14580 / DSM 13 / JCM 2505 / CCUG 7422 / NBRC 12200 / NCIMB 9375 / NCTC 10341 / NRRL NRS-1264 / Gibson 46).